We begin with the raw amino-acid sequence, 141 residues long: Large ribosomal subunit protein uL11B (141 aa).

Belongs to the universal ribosomal protein uL11 family. As to quaternary structure, part of the ribosomal stalk of the 50S ribosomal subunit. Interacts with L10 and the large rRNA to form the base of the stalk. L10 forms an elongated spine to which L12 dimers bind in a sequential fashion forming a multimeric L10(L12)X complex. Post-translationally, one or more lysine residues are methylated.

Functionally, forms part of the ribosomal stalk which helps the ribosome interact with GTP-bound translation factors. In Halalkalibacterium halodurans (strain ATCC BAA-125 / DSM 18197 / FERM 7344 / JCM 9153 / C-125) (Bacillus halodurans), this protein is Large ribosomal subunit protein uL11B.